A 342-amino-acid chain; its full sequence is Foldase protein PrsA (342 aa).

The N-terminal stretch at 1–22 (MVSVKKIVASALVGVLMFSAVG) is a signal peptide. A lipid anchor (N-palmitoyl cysteine) is attached at cysteine 23. Cysteine 23 is lipidated: S-diacylglycerol cysteine. In terms of domain architecture, PpiC spans 190-284 (AKGVLARHLL…FGYHIIQAGA (95 aa)).

It belongs to the PrsA family.

The protein localises to the cell membrane. The catalysed reaction is [protein]-peptidylproline (omega=180) = [protein]-peptidylproline (omega=0). Plays a major role in protein secretion by helping the post-translocational extracellular folding of several secreted proteins. The polypeptide is Foldase protein PrsA (Clostridium perfringens (strain SM101 / Type A)).